Reading from the N-terminus, the 404-residue chain is Serpin-Z2B (404 aa).

Residues 349-373 (GTEAAAATACTMKFLCLTLTSPVDF) form an RCL region.

Belongs to the serpin family.

In terms of biological role, probable serine protease inhibitor. The sequence is that of Serpin-Z2B from Oryza sativa subsp. japonica (Rice).